The chain runs to 488 residues: Secreted triacylglycerol lipase LIP1 (488 aa).

A signal peptide spans 1 to 26 (MPSMLSLFYLAQSLFLLLLFPLYGHA). A disulfide bond links Cys-119 and Cys-288. An N-linked (GlcNAc...) asparagine glycan is attached at Asn-183. Ser-201 serves as the catalytic Nucleophile. Asn-316 carries an N-linked (GlcNAc...) asparagine glycan. Active-site residues include Asp-348 and His-382. Residues 461–488 (SKSGSSLKSHSHSQTHKHRKDVSTISNA) form a disordered region. Residues 469-480 (SHSHSQTHKHRK) are compositionally biased toward basic residues.

The protein belongs to the AB hydrolase superfamily. Lipase family. Class Lip subfamily.

The protein resides in the secreted. The catalysed reaction is a triacylglycerol + H2O = a diacylglycerol + a fatty acid + H(+). It catalyses the reaction a monoacylglycerol + H2O = glycerol + a fatty acid + H(+). The enzyme catalyses a diacylglycerol + H2O = a monoacylglycerol + a fatty acid + H(+). With respect to regulation, inhibited by different metal ions including Fe(2+), Fe(3+), Cu(2+), and Zn(2+). The monovalent ions Na(+) and K(+) exhibit less dramatic inhibition. Its function is as follows. Secreted lipase that releases free fatty acids from monoacylglycerol and triacylglycerol but has no phospholipase or lysophospholipase activities. Has minor esterase activity. Due to an absence of fatty acid synthase genes in Malassezia species, secretory lipases are essential for the yeast to generate free fatty acids from degradation of sebum and assimilate them as lipid sources for growth. Plays important roles not only in lipid metabolism but also in the immune response of host cells and pathogenesis. Hydrolyzes lipids, such as Tween 20, 40 and 80, with Tween 80 being the best substrate. The sequence is that of Secreted triacylglycerol lipase LIP1 from Malassezia furfur (Pityriasis versicolor infection agent).